Consider the following 526-residue polypeptide: Peptide chain release factor 3 (526 aa).

The tr-type G domain maps to 11 to 277 (SKRRTFAIIS…SLIKWAPSPL (267 aa)). GTP contacts are provided by residues 20-27 (SHPDAGKT), 88-92 (DTPGH), and 142-145 (NKLD).

It belongs to the TRAFAC class translation factor GTPase superfamily. Classic translation factor GTPase family. PrfC subfamily.

Its subcellular location is the cytoplasm. Increases the formation of ribosomal termination complexes and stimulates activities of RF-1 and RF-2. It binds guanine nucleotides and has strong preference for UGA stop codons. It may interact directly with the ribosome. The stimulation of RF-1 and RF-2 is significantly reduced by GTP and GDP, but not by GMP. The polypeptide is Peptide chain release factor 3 (Buchnera aphidicola subsp. Acyrthosiphon pisum (strain 5A)).